The primary structure comprises 120 residues: Large ribosomal subunit protein uL18 (120 aa).

The protein belongs to the universal ribosomal protein uL18 family. Part of the 50S ribosomal subunit; part of the 5S rRNA/L5/L18/L25 subcomplex. Contacts the 5S and 23S rRNAs.

Its function is as follows. This is one of the proteins that bind and probably mediate the attachment of the 5S RNA into the large ribosomal subunit, where it forms part of the central protuberance. The sequence is that of Large ribosomal subunit protein uL18 from Rhodopseudomonas palustris (strain HaA2).